We begin with the raw amino-acid sequence, 156 residues long: Calglandulin (156 aa).

4 EF-hand domains span residues 8 to 43 (EQITEYKGIFEMFDEEGNGLVKTDDLESLMSLIGIN), 44 to 79 (PTKRDLANMAKDVDKDKKGTFNCEGFLVLMGIYHEK), 82 to 117 (NQDEELRAAFKVFDKEHKGYIEWDTLKYVLMNAGEP), and 118 to 153 (LNEHEAELMMKEADKDGDGTIDYEEFVAMMTGESFK). Positions 131, 133, 135, 137, and 142 each coordinate Ca(2+).

This sequence belongs to the calmodulin family. Calglandulin subfamily. In terms of tissue distribution, expressed by the venom gland.

It localises to the cytoplasm. In terms of biological role, may be involved in the cellular control mechanism of the secretion of toxins from the gland into the venom. The sequence is that of Calglandulin from Tropidechis carinatus (Australian rough-scaled snake).